Here is a 209-residue protein sequence, read N- to C-terminus: uncharacterized protein (209 aa).

This is an uncharacterized protein from Caldicellulosiruptor saccharolyticus (Caldocellum saccharolyticum).